The sequence spans 119 residues: Large ribosomal subunit protein uL24 (119 aa).

It belongs to the universal ribosomal protein uL24 family. In terms of assembly, part of the 50S ribosomal subunit.

One of two assembly initiator proteins, it binds directly to the 5'-end of the 23S rRNA, where it nucleates assembly of the 50S subunit. Functionally, located at the polypeptide exit tunnel on the outside of the subunit. The chain is Large ribosomal subunit protein uL24 from Haloquadratum walsbyi (strain DSM 16790 / HBSQ001).